We begin with the raw amino-acid sequence, 557 residues long: Dihydroxy-acid dehydratase (557 aa).

Mg(2+) is bound at residue Asp-78. Cys-119 provides a ligand contact to [2Fe-2S] cluster. Positions 120 and 121 each coordinate Mg(2+). Position 121 is an N6-carboxylysine (Lys-121). Cys-192 provides a ligand contact to [2Fe-2S] cluster. Glu-446 serves as a coordination point for Mg(2+). Ser-472 functions as the Proton acceptor in the catalytic mechanism.

Belongs to the IlvD/Edd family. As to quaternary structure, homodimer. Requires [2Fe-2S] cluster as cofactor. Mg(2+) is required as a cofactor.

It catalyses the reaction (2R)-2,3-dihydroxy-3-methylbutanoate = 3-methyl-2-oxobutanoate + H2O. The catalysed reaction is (2R,3R)-2,3-dihydroxy-3-methylpentanoate = (S)-3-methyl-2-oxopentanoate + H2O. It functions in the pathway amino-acid biosynthesis; L-isoleucine biosynthesis; L-isoleucine from 2-oxobutanoate: step 3/4. It participates in amino-acid biosynthesis; L-valine biosynthesis; L-valine from pyruvate: step 3/4. In terms of biological role, functions in the biosynthesis of branched-chain amino acids. Catalyzes the dehydration of (2R,3R)-2,3-dihydroxy-3-methylpentanoate (2,3-dihydroxy-3-methylvalerate) into 2-oxo-3-methylpentanoate (2-oxo-3-methylvalerate) and of (2R)-2,3-dihydroxy-3-methylbutanoate (2,3-dihydroxyisovalerate) into 2-oxo-3-methylbutanoate (2-oxoisovalerate), the penultimate precursor to L-isoleucine and L-valine, respectively. This Campylobacter fetus subsp. fetus (strain 82-40) protein is Dihydroxy-acid dehydratase.